Consider the following 146-residue polypeptide: MAVNREDFQEAIVKIGRVTKVVKGGRRFRFTALVVVGDKNGTVGFGTGKAKEVPDAIKKALDDAFKSLVTVSIKGTTIAHDIEHKYNASKILLRPASEGTGLIAGGAARPVLELSGVKDIIAKSLGSNNPNNLVQATVEALAKIKG.

The S5 DRBM domain maps to 8–71; sequence FQEAIVKIGR…DDAFKSLVTV (64 aa).

It belongs to the universal ribosomal protein uS5 family. As to quaternary structure, part of the 30S ribosomal subunit. Contacts proteins S4 and S8.

Its function is as follows. With S4 and S12 plays an important role in translational accuracy. Located at the back of the 30S subunit body where it stabilizes the conformation of the head with respect to the body. The polypeptide is Small ribosomal subunit protein uS5 (Aliarcobacter butzleri (strain RM4018) (Arcobacter butzleri)).